We begin with the raw amino-acid sequence, 369 residues long: Tryptophan 2,3-dioxygenase 2 (369 aa).

Substrate is bound by residues 36–40 (FIVVH) and Arg107. His303 provides a ligand contact to heme. Thr317 provides a ligand contact to substrate.

This sequence belongs to the tryptophan 2,3-dioxygenase family. As to quaternary structure, homotetramer. Heme is required as a cofactor.

The catalysed reaction is L-tryptophan + O2 = N-formyl-L-kynurenine. The protein operates within amino-acid degradation; L-tryptophan degradation via kynurenine pathway; L-kynurenine from L-tryptophan: step 1/2. Heme-dependent dioxygenase that catalyzes the oxidative cleavage of the L-tryptophan (L-Trp) pyrrole ring and converts L-tryptophan to N-formyl-L-kynurenine. Catalyzes the oxidative cleavage of the indole moiety. The sequence is that of Tryptophan 2,3-dioxygenase 2 from Ralstonia nicotianae (strain ATCC BAA-1114 / GMI1000) (Ralstonia solanacearum).